A 108-amino-acid chain; its full sequence is Evasin P1156 (108 aa).

The first 28 residues, 1–28, serve as a signal peptide directing secretion; that stretch reads MEVKTYAFLQIAVFIFLGMQIFASLTDA. Intrachain disulfides connect Cys41/Cys63, Cys45/Cys65, and Cys56/Cys76. Residue Asn44 is glycosylated (N-linked (GlcNAc...) asparagine). The interval 89-108 is disordered; sequence NPSDSEIEAAKPKRSDTLSH. Over residues 96–108 the composition is skewed to basic and acidic residues; sequence EAAKPKRSDTLSH.

Its subcellular location is the secreted. Its function is as follows. Salivary chemokine-binding protein which has chemokine-neutralizing activity and binds to host chemokines CXCL1, CXCL2, CXCL3, CXCL5, CXCL6 and CXCL8. The chain is Evasin P1156 from Ixodes ricinus (Common tick).